The primary structure comprises 273 residues: Undecaprenyl-diphosphatase (273 aa).

7 helical membrane passes run 6–26 (SLLI…LPVS), 45–65 (AKTF…VMFW), 90–110 (LTLI…LLFH), 116–136 (LFNP…LIAA), 190–210 (YAAS…ATAL), 222–242 (GDIP…LIAI), and 252–272 (ISFI…YVVF).

Belongs to the UppP family.

It is found in the cell inner membrane. The catalysed reaction is di-trans,octa-cis-undecaprenyl diphosphate + H2O = di-trans,octa-cis-undecaprenyl phosphate + phosphate + H(+). Its function is as follows. Catalyzes the dephosphorylation of undecaprenyl diphosphate (UPP). Confers resistance to bacitracin. The sequence is that of Undecaprenyl-diphosphatase from Escherichia coli O127:H6 (strain E2348/69 / EPEC).